The chain runs to 952 residues: Ubiquitin carboxyl-terminal hydrolase 15 (952 aa).

A2 is modified (N-acetylalanine). The segment at A2–G223 is mediates interaction with SART3. One can recognise a DUSP domain in the interval A7 to V118. T226 carries the phosphothreonine modification. Residues C260–Q904 form the USP domain. C269 functions as the Nucleophile in the catalytic mechanism. Residue T573 is modified to Phosphothreonine. Residues T598–C666 are disordered. A compositionally biased stretch (acidic residues) spans M627–S644. Residue H862 is the Proton acceptor of the active site. Residues S923 to N952 form a disordered region. A compositionally biased stretch (acidic residues) spans E931 to N945. Residues S932 and S936 each carry the phosphoserine modification.

Belongs to the peptidase C19 family. In terms of assembly, a homodimer structure has been reported; however it is unclear whether the protein form a homodimer in vivo. Identified in a complex with the COP9 signalosome complex (CSN). Interacts with SMAD1, SMAD2 and SMAD3; the interaction is direct. Forms a complex with SMURF2 and SMAD7. Interacts with TGFBR1. Interacts with SART3; the interaction is direct. May interact with RNF20 and RNF40. May interact with PRKN. Interacts with INCA1. Post-translationally, phosphorylated. Phosphorylation protects against ubiquitination and subsequent degradation by the proteasome. In terms of processing, ubiquitinated, leading to degradation by the proteasome.

It localises to the cytoplasm. It is found in the nucleus. The protein localises to the mitochondrion. The catalysed reaction is Thiol-dependent hydrolysis of ester, thioester, amide, peptide and isopeptide bonds formed by the C-terminal Gly of ubiquitin (a 76-residue protein attached to proteins as an intracellular targeting signal).. In terms of biological role, hydrolase that removes conjugated ubiquitin from target proteins and regulates various pathways such as the TGF-beta receptor signaling, NF-kappa-B and RNF41/NRDP1-PRKN pathways. Acts as a key regulator of TGF-beta receptor signaling pathway, but the precise mechanism is still unclear: according to a report, acts by promoting deubiquitination of monoubiquitinated R-SMADs (SMAD1, SMAD2 and/or SMAD3), thereby alleviating inhibition of R-SMADs and promoting activation of TGF-beta target genes. According to another reports, regulates the TGF-beta receptor signaling pathway by mediating deubiquitination and stabilization of TGFBR1, leading to an enhanced TGF-beta signal. Able to mediate deubiquitination of monoubiquitinated substrates, 'Lys-27'-, 'Lys-48'- and 'Lys-63'-linked polyubiquitin chains. May also regulate gene expression and/or DNA repair through the deubiquitination of histone H2B. Acts as an inhibitor of mitophagy by counteracting the action of parkin (PRKN): hydrolyzes cleavage of 'Lys-48'- and 'Lys-63'-linked polyubiquitin chains attached by parkin on target proteins such as MFN2, thereby reducing parkin's ability to drive mitophagy. Acts as an associated component of COP9 signalosome complex (CSN) and regulates different pathways via this association: regulates NF-kappa-B by mediating deubiquitination of NFKBIA and deubiquitinates substrates bound to VCP. Involved in endosome organization by mediating deubiquitination of SQSTM1: ubiquitinated SQSTM1 forms a molecular bridge that restrains cognate vesicles in the perinuclear region and its deubiquitination releases target vesicles for fast transport into the cell periphery. Acts as a negative regulator of antifungal immunity by mediating 'Lys-27'-linked deubiquitination of CARD9, thereby inactivating CARD9. The sequence is that of Ubiquitin carboxyl-terminal hydrolase 15 (USP15) from Bos taurus (Bovine).